The primary structure comprises 557 residues: Potassium-transporting ATPase potassium-binding subunit (557 aa).

A run of 12 helical transmembrane segments spans residues 5–25, 63–83, 132–152, 170–190, 253–273, 283–303, 329–349, 356–376, 379–399, 416–436, 484–504, and 526–546; these read GFLL…PLGS, LCAI…MLLG, GLTV…FAFI, LLRI…LFFI, FVQM…FGEV, LLWA…WAEV, VLVS…AVIA, ALGG…FGGV, GLYG…LMIG, LTAL…ALAM, LLAF…MAIA, and LFVG…FIPA.

It belongs to the KdpA family. In terms of assembly, the system is composed of three essential subunits: KdpA, KdpB and KdpC.

It is found in the cell inner membrane. Its function is as follows. Part of the high-affinity ATP-driven potassium transport (or Kdp) system, which catalyzes the hydrolysis of ATP coupled with the electrogenic transport of potassium into the cytoplasm. This subunit binds the periplasmic potassium ions and delivers the ions to the membrane domain of KdpB through an intramembrane tunnel. This chain is Potassium-transporting ATPase potassium-binding subunit, found in Shigella boydii serotype 4 (strain Sb227).